Reading from the N-terminus, the 135-residue chain is uncharacterized protein (135 aa).

4 consecutive transmembrane segments (helical) span residues 4-24, 26-46, 68-88, and 93-113; these read IIIC…WIFG, WDMP…TGVI, LILV…NGAW, and LIAY…CAAL.

Belongs to the bacteriophage holin family. Cp-1 holin subfamily.

Its subcellular location is the cell membrane. This is an uncharacterized protein from Clostridium perfringens (strain 13 / Type A).